The chain runs to 214 residues: Probable GTP-binding protein EngB (214 aa).

In terms of domain architecture, EngB-type G spans 22–194 (HLPEIAFAGR…WARIDALLEP (173 aa)). Residues 30–37 (GRSNVGKS), 57–61 (GRTQL), 75–78 (DLPG), 142–145 (TKCD), and 173–175 (FSA) contribute to the GTP site. Residues S37 and T59 each contribute to the Mg(2+) site. Positions 195–214 (TAAETPGIPEEPAPPGPVND) are disordered. Residues 203 to 214 (PEEPAPPGPVND) are compositionally biased toward pro residues.

This sequence belongs to the TRAFAC class TrmE-Era-EngA-EngB-Septin-like GTPase superfamily. EngB GTPase family. Mg(2+) is required as a cofactor.

Functionally, necessary for normal cell division and for the maintenance of normal septation. The protein is Probable GTP-binding protein EngB of Geobacter sp. (strain M21).